Here is a 1170-residue protein sequence, read N- to C-terminus: Putative DNA topoisomerase 2, mitochondrial (1170 aa).

ATP is bound by residues N106, N135, 163–165, 176–183, and 396–398; these read SSN, GRNGYGAK, and QTK. Positions 475–590 constitute a Toprim domain; sequence CTLILTEGDS…SLVHTDGFIQ (116 aa). Residues E481, D559, and D561 each coordinate Mg(2+). The Topo IIA-type catalytic domain maps to 722-1157; sequence IPSLIDGLKP…DWKSVWRSEL (436 aa). Y813 functions as the O-(5'-phospho-DNA)-tyrosine intermediate in the catalytic mechanism.

Belongs to the type II topoisomerase family. As to quaternary structure, homodimer. The cofactor is Mg(2+). It depends on Mn(2+) as a cofactor. Ca(2+) is required as a cofactor.

Its subcellular location is the mitochondrion. The catalysed reaction is ATP-dependent breakage, passage and rejoining of double-stranded DNA.. In terms of biological role, control of topological states of DNA by transient breakage and subsequent rejoining of DNA strands. Topoisomerase II makes double-strand breaks. In Caenorhabditis elegans, this protein is Putative DNA topoisomerase 2, mitochondrial.